Consider the following 770-residue polypeptide: Molybdenum cofactor sulfurase (770 aa).

Lys-231 is subject to N6-(pyridoxal phosphate)lysine. Residue Cys-395 is part of the active site. The 170-residue stretch at Asp-601–Glu-770 folds into the MOSC domain.

Belongs to the class-V pyridoxal-phosphate-dependent aminotransferase family. MOCOS subfamily. Pyridoxal 5'-phosphate is required as a cofactor.

It carries out the reaction Mo-molybdopterin + L-cysteine + AH2 = thio-Mo-molybdopterin + L-alanine + A + H2O. Its function is as follows. Sulfurates the molybdenum cofactor. Sulfation of molybdenum is essential for xanthine dehydrogenase (XDH) and aldehyde oxidase (ADO) enzymes in which molybdenum cofactor is liganded by 1 oxygen and 1 sulfur atom in active form. This is Molybdenum cofactor sulfurase from Anopheles gambiae (African malaria mosquito).